A 1291-amino-acid polypeptide reads, in one-letter code: Ethylene-insensitive protein 2.2 (1291 aa).

Helical transmembrane passes span 18–38 (ALPALGPGLLIAIGYVDPGKW), 48–68 (FGFDLVLPMLIFNFVAILCQY), 96–116 (FLGVQAALSVIALDLTMILGI), 128–148 (LSTCVFLAAVDAVLFPVFATL), 155–175 (SFLSTCIAGFLLLLYFFGVLI), and 195–215 (SAFALMSLLGASIMPHNFFLH). Asparagine 227 is a glycosylation site (N-linked (GlcNAc...) asparagine). The next 7 helical transmembrane spans lie at 231–251 (GALCLNHFFAILCIFSGIYLV), 253–273 (YVLMNSAANVFYSTGLVLLTF), 288–308 (VALCVFSLILFFANHITALTW), 335–355 (IIAVVPALYCVWTSGVEGIYQ), 356–376 (LLIFTQVMVALLLPSSVIPLF), 393–413 (FLEFLALISFMGMLGIKIIFV), and 441–461 (VLLITACSSFCLMLWLAATPL). The disordered stretch occupies residues 498–518 (TEEESIGGQEQLSGPGKSAES). Asparagine 550 carries N-linked (GlcNAc...) asparagine glycosylation. Positions 614–662 (AEKEDDEGDSWEPEESSKGVPGSTSSLTSDGPGSFRSLSGKSDEGGNGA) are disordered. Residues 617–627 (EDDEGDSWEPE) are compositionally biased toward acidic residues. The segment covering 635–653 (GSTSSLTSDGPGSFRSLSG) has biased composition (polar residues). Residues serine 647 and serine 664 each carry the phosphoserine modification. Disordered regions lie at residues 742–768 (QIHSSLGDSPNHLRVPSNIDSSYGGQR) and 787–808 (GPSRSIADSSERRYSSVHTLPS). A compositionally biased stretch (polar residues) spans 759-768 (NIDSSYGGQR). Residue threonine 818 is modified to Phosphothreonine. Residues 836 to 856 (GSSSLNGQMDSPAPISPSLGP) are disordered. N-linked (GlcNAc...) asparagine glycosylation occurs at asparagine 891. Phosphoserine is present on serine 923. The N-linked (GlcNAc...) asparagine glycan is linked to asparagine 1027. A disordered region spans residues 1210–1229 (HRSSPPVSNGMLPPASKPGR). A Nuclear localization signal motif is present at residues 1262-1269 (DVAFPKGK).

This sequence belongs to the NRAMP (TC 2.A.55) family.

It is found in the endoplasmic reticulum membrane. It localises to the nucleus. The protein resides in the cytoplasm. Its function is as follows. Central factor in signaling pathways regulated by ethylene (ET) and involved in various processes including development, plant defense, senescence, nucleotide sugar flux, and tropisms. Trafficking signal inducing ethylene response. The nuclear localization is both necessary and sufficient to activate EIN3-mediated transcription and ethylene responses. The chain is Ethylene-insensitive protein 2.2 from Populus trichocarpa (Western balsam poplar).